A 239-amino-acid polypeptide reads, in one-letter code: MLGGSVKSEVRASEPSPTCQDPETKAPHQDLPRPNQPAASGSVPSRPRRRPPPQRPHRCPDCPKAFSYPSKLATHRLAHGGTRPHPCPDCPKAFSYPSKLAAHRLTHSGARPHSCPHCPKAFGHRSKLAAHLWTHAPARPYPCPDCPKSFCYPSKLAAHRHTHHATDARPYPCPHCPKAFSFPSKLAAHRLCHDPPTAPSSQATGSHRCSSCNQAFGQRRLLLVHQRSHHQSEGQGERE.

The tract at residues 1–62 (MLGGSVKSEV…PQRPHRCPDC (62 aa)) is disordered. A compositionally biased stretch (basic and acidic residues) spans 22-31 (PETKAPHQDL). The segment covering 46-57 (RPRRRPPPQRPH) has biased composition (basic residues). C2H2-type zinc fingers lie at residues 57–79 (HRCPDCPKAFSYPSKLATHRLAH), 85–107 (HPCPDCPKAFSYPSKLAAHRLTH), 113–135 (HSCPHCPKAFGHRSKLAAHLWTH), 141–163 (YPCPDCPKSFCYPSKLAAHRHTH), 171–193 (YPCPHCPKAFSFPSKLAAHRLCH), and 207–230 (HRCSSCNQAFGQRRLLLVHQRSHH).

It belongs to the krueppel C2H2-type zinc-finger protein family.

It is found in the nucleus. In terms of biological role, may be involved in transcriptional regulation. In Mus musculus (Mouse), this protein is Zinc finger protein 575 (Znf575).